Consider the following 251-residue polypeptide: MKFVVVFASCVLAVSAGVTEMSAASMSSSNKELEEKLYNSILTGDYDSAVRQSLEYENQGKGSIIQNVVNNLIIDGSRNTMEYCYKLWVGNGQHIVRKYFPYNFRLIMAGNFVKLIYRNYNLALKLGPTLDPANERLAYGDGKEKNSDLISWKSHYLVGEQHSVLQDPPTLSYNQYLKLSSTTDCNTQDRIIFGTNTADTTREQWFLQPTKYENDVLFFIYNREVQRVALKLGRIVDASGDRSGIWTRWMK.

The first 16 residues, 1-16 (MKFVVVFASCVLAVSA), serve as a signal peptide directing secretion.

Belongs to the 30 kDa lipoprotein family.

It localises to the secreted. The polypeptide is Low molecular mass lipoprotein PBMHPC-21 (Bombyx mori (Silk moth)).